The sequence spans 418 residues: Actin-related protein 3 (418 aa).

It belongs to the actin family. ARP3 subfamily. Component of the Arp2/3 complex composed of actr2/arp2, actr3/arp3, arpc1b, arpc2, arpc3, arpc4 and arpc5.

It localises to the cytoplasm. The protein localises to the cytoskeleton. The protein resides in the cell projection. Its subcellular location is the nucleus. Its function is as follows. ATP-binding component of the Arp2/3 complex, a multiprotein complex that mediates actin polymerization upon stimulation by nucleation-promoting factor (NPF). The Arp2/3 complex mediates the formation of branched actin networks in the cytoplasm, providing the force for cell motility. Seems to contact the pointed end of the daughter actin filament. In addition to its role in the cytoplasmic cytoskeleton, the Arp2/3 complex also promotes actin polymerization in the nucleus, thereby regulating gene transcription and repair of damaged DNA. The Arp2/3 complex promotes homologous recombination (HR) repair in response to DNA damage by promoting nuclear actin polymerization, leading to drive motility of double-strand breaks (DSBs). The polypeptide is Actin-related protein 3 (actr3) (Takifugu rubripes (Japanese pufferfish)).